A 352-amino-acid polypeptide reads, in one-letter code: C-X-C chemokine receptor type 4 (352 aa).

The important for chemokine binding and signaling stretch occupies residues Met-1 to Tyr-21. Residues Met-1–Lys-38 are Extracellular-facing. A Sulfotyrosine modification is found at Tyr-7. A glycan (N-linked (GlcNAc...) asparagine) is linked at Asn-11. Residue Tyr-12 is modified to Sulfotyrosine. Residue Ser-18 is glycosylated (O-linked (Xyl...) (chondroitin sulfate) serine). The residue at position 21 (Tyr-21) is a Sulfotyrosine. Cystine bridges form between Cys-28–Cys-274 and Cys-109–Cys-186. The chain crosses the membrane as a helical span at residues Ile-39–Met-63. Topologically, residues Gly-64–Arg-77 are cytoplasmic. A helical transmembrane segment spans residues Leu-78–Val-99. Positions Trp-94–Asp-97 are chemokine binding. The Extracellular segment spans residues Ala-100 to Lys-110. Residues Ala-111–Ile-130 traverse the membrane as a helical segment. A chemokine binding region spans residues His-113–Thr-117. Residues Ser-131–Lys-154 lie on the Cytoplasmic side of the membrane. The short motif at Asp-133–Tyr-135 is the Important for signaling element. An involved in dimerization; when bound to chemokine region spans residues Tyr-135–Pro-147. The helical transmembrane segment at Val-155–Phe-174 threads the bilayer. Topologically, residues Ala-175 to Trp-195 are extracellular. Residues Cys-186–Tyr-190 are chemokine binding, important for signaling. An involved in dimerization region spans residues Pro-191–Leu-210. A helical membrane pass occupies residues Val-196 to Leu-216. The Cytoplasmic portion of the chain corresponds to Ser-217–Thr-241. A helical transmembrane segment spans residues Val-242–Ile-261. Residues Asp-262–Lys-282 are Extracellular-facing. An involved in dimerization region spans residues Leu-266–Glu-268. Residues Trp-283–Tyr-302 form a helical membrane-spanning segment. Residues Ala-303 to Ser-352 are Cytoplasmic-facing. Residues Ser-319 and Ser-321 each carry the phosphoserine modification. Phosphoserine; by PKC and GRK6 is present on residues Ser-324 and Ser-325. A disordered region spans residues Leu-329–Ser-352. Ser-330 carries the post-translational modification Phosphoserine; by GRK6. Lys-331 is covalently cross-linked (Glycyl lysine isopeptide (Lys-Gly) (interchain with G-Cter in ubiquitin)). Low complexity predominate over residues His-337–Ser-352. Ser-339 is modified (phosphoserine; by GRK6). Phosphoserine occurs at positions 348 and 351.

Belongs to the G-protein coupled receptor 1 family. In terms of assembly, monomer. Can form homodimers. Interacts with CD164. Interacts with ARRB2; the interaction is dependent on the C-terminal phosphorylation of CXCR4 and allows activation of MAPK1 and MAPK3. Interacts with ARR3; the interaction is dependent on the C-terminal phosphorylation of CXCR4 and modulates calcium mobilization. Interacts with RNF113A; the interaction, enhanced by CXCL12, promotes CXCR4 ubiquitination and subsequent degradation. Interacts (via the cytoplasmic C-terminal) with ITCH (via the WW domains I and II); the interaction, enhanced by CXCL12, promotes CXCR4 ubiquitination and leads to its degradation. Interacts with extracellular ubiquitin. Interacts with DBN1; this interaction is enhanced by antigenic stimulation. Following LPS binding, may form a complex with GDF5, HSP90AA1 and HSPA8. Phosphorylated on agonist stimulation. Rapidly phosphorylated on serine and threonine residues in the C-terminal. Phosphorylation at Ser-324 and Ser-325 leads to recruitment of ITCH, ubiquitination and protein degradation. In terms of processing, ubiquitinated after ligand binding, leading to its degradation. Ubiquitinated by ITCH at the cell membrane on agonist stimulation. The ubiquitin-dependent mechanism, endosomal sorting complex required for transport (ESCRT), then targets CXCR4 for lysosomal degradation. This process is dependent also on prior Ser-/Thr-phosphorylation in the C-terminal of CXCR4. Also binding of ARRB1 to STAM negatively regulates CXCR4 sorting to lysosomes though modulating ubiquitination of SFR5S. Post-translationally, sulfation is required for efficient binding of CXCL12/SDF-1alpha and promotes its dimerization. O- and N-glycosylated. N-glycosylation can mask coreceptor function. The O-glycosylation chondroitin sulfate attachment does not affect interaction with CXCL12/SDF-1alpha nor its coreceptor activity.

The protein localises to the cell membrane. Its subcellular location is the cell junction. It localises to the early endosome. The protein resides in the late endosome. It is found in the lysosome. Its function is as follows. Receptor for the C-X-C chemokine CXCL12/SDF-1 that transduces a signal by increasing intracellular calcium ion levels and enhancing MAPK1/MAPK3 activation. Involved in the AKT signaling cascade. Plays a role in regulation of cell migration, e.g. during wound healing. Acts as a receptor for extracellular ubiquitin; leading to enhanced intracellular calcium ions and reduced cellular cAMP levels. Binds bacterial lipopolysaccharide (LPS) et mediates LPS-induced inflammatory response, including TNF secretion by monocytes. Involved in hematopoiesis and in cardiac ventricular septum formation. Also plays an essential role in vascularization of the gastrointestinal tract, probably by regulating vascular branching and/or remodeling processes in endothelial cells. Involved in cerebellar development. In the CNS, could mediate hippocampal-neuron survival. The sequence is that of C-X-C chemokine receptor type 4 (CXCR4) from Pan troglodytes (Chimpanzee).